The chain runs to 504 residues: Maturase K (504 aa).

Belongs to the intron maturase 2 family. MatK subfamily.

It localises to the plastid. The protein localises to the chloroplast. Usually encoded in the trnK tRNA gene intron. Probably assists in splicing its own and other chloroplast group II introns. This chain is Maturase K, found in Quercus gemelliflora (Pasang hiris).